The primary structure comprises 156 residues: Small ribosomal subunit protein uS7 (156 aa).

Belongs to the universal ribosomal protein uS7 family. Part of the 30S ribosomal subunit. Contacts proteins S9 and S11.

In terms of biological role, one of the primary rRNA binding proteins, it binds directly to 16S rRNA where it nucleates assembly of the head domain of the 30S subunit. Is located at the subunit interface close to the decoding center, probably blocks exit of the E-site tRNA. The chain is Small ribosomal subunit protein uS7 from Trichormus variabilis (strain ATCC 29413 / PCC 7937) (Anabaena variabilis).